Reading from the N-terminus, the 233-residue chain is Putative N-acetylmannosamine-6-phosphate 2-epimerase (233 aa).

This sequence belongs to the NanE family.

It catalyses the reaction an N-acyl-D-glucosamine 6-phosphate = an N-acyl-D-mannosamine 6-phosphate. The protein operates within amino-sugar metabolism; N-acetylneuraminate degradation; D-fructose 6-phosphate from N-acetylneuraminate: step 3/5. Converts N-acetylmannosamine-6-phosphate (ManNAc-6-P) to N-acetylglucosamine-6-phosphate (GlcNAc-6-P). The chain is Putative N-acetylmannosamine-6-phosphate 2-epimerase from Yersinia pseudotuberculosis serotype IB (strain PB1/+).